A 334-amino-acid polypeptide reads, in one-letter code: Malate dehydrogenase, cytoplasmic (334 aa).

Residue 11–17 coordinates NAD(+); sequence GAAGQIA. Residues Arg-92 and Arg-98 each coordinate substrate. Residues Asn-105, Gln-112, and 129–131 contribute to the NAD(+) site; that span reads VGN. Positions 131 and 162 each coordinate substrate. Residue His-187 is the Proton acceptor of the active site.

The protein belongs to the LDH/MDH superfamily. MDH type 2 family. In terms of assembly, homodimer.

Its subcellular location is the cytoplasm. It is found in the cytosol. The catalysed reaction is (S)-malate + NAD(+) = oxaloacetate + NADH + H(+). The enzyme catalyses (S)-2-hydroxyglutarate + NAD(+) = 2-oxoglutarate + NADH + H(+). Functionally, catalyzes the reduction of aromatic alpha-keto acids in the presence of NADH. Plays essential roles in the malate-aspartate shuttle and the tricarboxylic acid cycle, important in mitochondrial NADH supply for oxidative phosphorylation. Catalyzes the reduction of 2-oxoglutarate to 2-hydroxyglutarate, leading to elevated reactive oxygen species (ROS). The protein is Malate dehydrogenase, cytoplasmic (mdh1) of Xenopus laevis (African clawed frog).